A 238-amino-acid chain; its full sequence is Ribonuclease 3 (238 aa).

The RNase III domain occupies 4 to 130 (IQTLFQTLNI…LFGAIYLDLG (127 aa)). Glu45 provides a ligand contact to Mg(2+). Residue Asp49 is part of the active site. 2 residues coordinate Mg(2+): Asp116 and Glu119. The active site involves Glu119. The 69-residue stretch at 154 to 222 (DFKTQLQEIV…AQQALSKVAK (69 aa)) folds into the DRBM domain. Residues 215–238 (QALSKVAKPKDLLNNKGGKEKELQ) form a disordered region. Positions 222 to 238 (KPKDLLNNKGGKEKELQ) are enriched in basic and acidic residues.

It belongs to the ribonuclease III family. As to quaternary structure, homodimer. It depends on Mg(2+) as a cofactor.

The protein resides in the cytoplasm. The catalysed reaction is Endonucleolytic cleavage to 5'-phosphomonoester.. In terms of biological role, digests double-stranded RNA. Involved in the processing of primary rRNA transcript to yield the immediate precursors to the large and small rRNAs (23S and 16S). Processes some mRNAs, and tRNAs when they are encoded in the rRNA operon. Processes pre-crRNA and tracrRNA of type II CRISPR loci if present in the organism. In Onion yellows phytoplasma (strain OY-M), this protein is Ribonuclease 3.